The following is a 152-amino-acid chain: Transcriptional repressor NrdR (152 aa).

A zinc finger spans residues 3–34 (CPFCGHADTQVVDSRVSEDGASIRRRRRCLEC). The region spanning 49 to 139 (PQVVKQDGHR…VYRSFQDVAE (91 aa)) is the ATP-cone domain.

Belongs to the NrdR family. Zn(2+) serves as cofactor.

Functionally, negatively regulates transcription of bacterial ribonucleotide reductase nrd genes and operons by binding to NrdR-boxes. This chain is Transcriptional repressor NrdR, found in Laribacter hongkongensis (strain HLHK9).